The sequence spans 121 residues: Large ribosomal subunit protein bL12 (121 aa).

This sequence belongs to the bacterial ribosomal protein bL12 family. In terms of assembly, homodimer. Part of the ribosomal stalk of the 50S ribosomal subunit. Forms a multimeric L10(L12)X complex, where L10 forms an elongated spine to which 2 to 4 L12 dimers bind in a sequential fashion. Binds GTP-bound translation factors.

Forms part of the ribosomal stalk which helps the ribosome interact with GTP-bound translation factors. Is thus essential for accurate translation. This chain is Large ribosomal subunit protein bL12, found in Acinetobacter baylyi (strain ATCC 33305 / BD413 / ADP1).